The sequence spans 719 residues: Probable phosphatidylinositol phosphate kinase DDB_G0267588 (719 aa).

The disordered stretch occupies residues Val-47–Asn-261. Composition is skewed to low complexity over residues Thr-57–Thr-77 and Ile-87–Ile-104. Residues Ala-107 to Ser-129 show a composition bias toward basic and acidic residues. A compositionally biased stretch (polar residues) spans Phe-172–Val-184. Residues Thr-199–Asn-217 show a composition bias toward low complexity. Composition is skewed to polar residues over residues Lys-218 to Ser-228 and Ala-248 to Asn-261. The residue at position 262 (Thr-262) is a Phosphothreonine. The PIPK domain maps to Asn-316–Ile-718. The tract at residues Arg-579 to Lys-638 is disordered. A compositionally biased stretch (low complexity) spans Gln-606–Gly-619.

Post-translationally, phosphorylated at Thr-262 by pkgB.

May be involved in signaling events that underlie chemotaxis via the chemoattractant-mediated pkgB phosphorylation. The chain is Probable phosphatidylinositol phosphate kinase DDB_G0267588 from Dictyostelium discoideum (Social amoeba).